The chain runs to 430 residues: tRNA(Ile)-lysidine synthase (430 aa).

21 to 26 (SGGLDS) lines the ATP pocket.

The protein belongs to the tRNA(Ile)-lysidine synthase family.

It is found in the cytoplasm. It catalyses the reaction cytidine(34) in tRNA(Ile2) + L-lysine + ATP = lysidine(34) in tRNA(Ile2) + AMP + diphosphate + H(+). Ligates lysine onto the cytidine present at position 34 of the AUA codon-specific tRNA(Ile) that contains the anticodon CAU, in an ATP-dependent manner. Cytidine is converted to lysidine, thus changing the amino acid specificity of the tRNA from methionine to isoleucine. This chain is tRNA(Ile)-lysidine synthase, found in Salmonella paratyphi A (strain ATCC 9150 / SARB42).